The sequence spans 172 residues: C-phycocyanin beta chain (172 aa).

(2R,3E)-phycocyanobilin-binding positions include Asn35, Asp39, Asn72, Arg77, Cys82, 82 to 88 (CLRDMEI), 149 to 151 (TIG), and Cys153. Residue Asn72 is modified to N4-methylasparagine.

The protein belongs to the phycobiliprotein family. In terms of assembly, heterodimer of an alpha and a beta subunit, which further assembles into trimers and the trimers into hexamers. The basic functional unit of phycobiliproteins is a ring-shaped hexamer formed from two back-to-back trimers contacting via the alpha chain subunits. The trimers are composed of alpha/beta subunit heterodimers arranged around a three-fold axis of symmetry. The phycoerythrins also contain a gamma subunit which is located in the center of the hexamer. Contains two covalently linked phycocyanobilin chromophores.

It localises to the plastid. Its subcellular location is the chloroplast thylakoid membrane. Functionally, light-harvesting photosynthetic tetrapyrrole chromophore-protein from the phycobiliprotein complex (phycobilisome, PBS). Phycocyanin is the major phycobiliprotein in the PBS rod. This Cyanidium caldarium (Red alga) protein is C-phycocyanin beta chain (cpcB).